A 90-amino-acid polypeptide reads, in one-letter code: UPF0297 protein Cthe_0151 (90 aa).

It belongs to the UPF0297 family.

The protein is UPF0297 protein Cthe_0151 of Acetivibrio thermocellus (strain ATCC 27405 / DSM 1237 / JCM 9322 / NBRC 103400 / NCIMB 10682 / NRRL B-4536 / VPI 7372) (Clostridium thermocellum).